A 220-amino-acid polypeptide reads, in one-letter code: ATP synthase subunit 5, mitochondrial (220 aa).

It belongs to the ATPase delta chain family. F-type ATPases have 2 components, CF(1) - the catalytic core - and CF(0) - the membrane proton channel. CF(1) has five subunits: alpha(3), beta(3), gamma(1), delta(1), epsilon(1). CF(0) has three main subunits: a, b and c.

It is found in the mitochondrion. Its subcellular location is the mitochondrion inner membrane. Its function is as follows. Mitochondrial membrane ATP synthase (F(1)F(0) ATP synthase or Complex V) produces ATP from ADP in the presence of a proton gradient across the membrane which is generated by electron transport complexes of the respiratory chain. F-type ATPases consist of two structural domains, F(1) - containing the extramembraneous catalytic core and F(0) - containing the membrane proton channel, linked together by a central stalk and a peripheral stalk. During catalysis, ATP synthesis in the catalytic domain of F(1) is coupled via a rotary mechanism of the central stalk subunits to proton translocation. Part of the complex F(0) domain and the peripheric stalk, which acts as a stator to hold the catalytic alpha(3)beta(3) subcomplex and subunit a/ATP6 static relative to the rotary elements. The chain is ATP synthase subunit 5, mitochondrial (atp-5) from Neurospora crassa (strain ATCC 24698 / 74-OR23-1A / CBS 708.71 / DSM 1257 / FGSC 987).